The chain runs to 196 residues: Nucleoside triphosphate pyrophosphatase (196 aa).

Asp73 acts as the Proton acceptor in catalysis.

This sequence belongs to the Maf family. A divalent metal cation serves as cofactor.

The protein resides in the cytoplasm. It catalyses the reaction a ribonucleoside 5'-triphosphate + H2O = a ribonucleoside 5'-phosphate + diphosphate + H(+). It carries out the reaction a 2'-deoxyribonucleoside 5'-triphosphate + H2O = a 2'-deoxyribonucleoside 5'-phosphate + diphosphate + H(+). Functionally, nucleoside triphosphate pyrophosphatase. May have a dual role in cell division arrest and in preventing the incorporation of modified nucleotides into cellular nucleic acids. The polypeptide is Nucleoside triphosphate pyrophosphatase (Anaplasma marginale (strain Florida)).